The chain runs to 219 residues: Small ribosomal subunit protein uS3 (219 aa).

In terms of domain architecture, KH type-2 spans 38-106 (IREYIENRLK…RVHINIFEVK (69 aa)).

The protein belongs to the universal ribosomal protein uS3 family. In terms of assembly, part of the 30S ribosomal subunit. Forms a tight complex with proteins S10 and S14.

In terms of biological role, binds the lower part of the 30S subunit head. Binds mRNA in the 70S ribosome, positioning it for translation. This Halalkalibacterium halodurans (strain ATCC BAA-125 / DSM 18197 / FERM 7344 / JCM 9153 / C-125) (Bacillus halodurans) protein is Small ribosomal subunit protein uS3.